Consider the following 741-residue polypeptide: Mitofusin-1 (741 aa).

Topologically, residues 1 to 584 are cytoplasmic; the sequence is MAETVSPLKH…AAQEELMITL (584 aa). Residues 9–73 form a part of a helix bundle domain, formed by helices from N-terminal and C-terminal regions region; the sequence is KHFVLAKKAI…LAVIGEVLSR (65 aa). Positions 72 to 321 constitute a Dynamin-type G domain; that stretch reads SRRHMKVAFF…ARLQEFQNFE (250 aa). Residues 82–89 are G1 motif; the sequence is GRTSSGKS. A GTP-binding site is contributed by 85-90; that stretch reads SSGKSS. The G2 motif stretch occupies residues 108–109; sequence TT. Residues 178–181 form a G3 motif region; the sequence is DSPG. A GTP-binding site is contributed by 237-240; that stretch reads NRWD. The interval 237 to 240 is G4 motif; sequence NRWD. Position 266 (glutamate 266) is a region of interest, G5 motif. Serine 284 and lysine 286 together coordinate GTP. The tract at residues 338 to 364 is part of a helix bundle domain, formed by helices from N-terminal and C-terminal regions; it reads EQHTIRAKQILDTVKNILDSVNVAAAE. The stretch at 371–408 forms a coiled coil; the sequence is EEREDQIDRLDFIRNQMNLLTLDVKKKIKEVTEEVANK. Residues 585–605 form a helical membrane-spanning segment; sequence ITGLASLTSRTSMGIIVVGGV. Over 606-608 the chain is Mitochondrial intermembrane; sequence IWK. Residues 609–629 traverse the membrane as a helical segment; sequence TVGWKLISVTLSMYGALYLYE. At 630–741 the chain is on the cytoplasmic side; sequence RLTWTTRAKE…QFLHPSSGES (112 aa). Residues 677 to 735 adopt a coiled-coil conformation; sequence FARLCQQVDVTQKHLEEEIARLSKEIDQLEKIQNNSKLLRNKAVQLESELENFSKQFLH. The part of a helix bundle domain, formed by helices from N-terminal and C-terminal regions stretch occupies residues 703–734; sequence DQLEKIQNNSKLLRNKAVQLESELENFSKQFL.

It belongs to the TRAFAC class dynamin-like GTPase superfamily. Dynamin/Fzo/YdjA family. Mitofusin subfamily. In terms of assembly, homodimer, also in the absence of bound GTP. Forms higher oligomers in the presence of a transition state GTP analog. Forms homomultimers and heteromultimers with MFN2. Oligomerization is essential for mitochondrion fusion. Component of a high molecular weight multiprotein complex. Interacts with VAT1. Interacts with THG1L; THG1L probably functions as a guanyl-nucleotide exchange factor/GEF, activating MFN1. In terms of processing, ubiquitinated by MARCHF5. When mitochondria are depolarized and dysfunctional, it is ubiquitinated by a SCF (SKP1-CUL1-F-box protein) E3 ubiquitin-protein ligase complex that contains FBXO7 and PRKN. Ubiquitinated by non-degradative ubiquitin by PRKN, promoting mitochondrial fusion; deubiquitination by USP30 inhibits mitochondrial fusion. As to expression, detected in adult heart. Detected in embryos (at protein level). Widely expressed.

It localises to the mitochondrion outer membrane. It carries out the reaction GTP + H2O = GDP + phosphate + H(+). In terms of biological role, mitochondrial outer membrane GTPase that mediates mitochondrial clustering and fusion. Membrane clustering requires GTPase activity. It may involve a major rearrangement of the coiled coil domains. Mitochondria are highly dynamic organelles, and their morphology is determined by the equilibrium between mitochondrial fusion and fission events. Overexpression induces the formation of mitochondrial networks (in vitro). Has low GTPase activity. The chain is Mitofusin-1 (Mfn1) from Mus musculus (Mouse).